Consider the following 121-residue polypeptide: Large ribosomal subunit protein uL18 (121 aa).

The protein belongs to the universal ribosomal protein uL18 family. In terms of assembly, part of the 50S ribosomal subunit; part of the 5S rRNA/L5/L18/L25 subcomplex. Contacts the 5S and 23S rRNAs.

In terms of biological role, this is one of the proteins that bind and probably mediate the attachment of the 5S RNA into the large ribosomal subunit, where it forms part of the central protuberance. The polypeptide is Large ribosomal subunit protein uL18 (Leptothrix cholodnii (strain ATCC 51168 / LMG 8142 / SP-6) (Leptothrix discophora (strain SP-6))).